Consider the following 375-residue polypeptide: D-aspartate oxidase (375 aa).

An N-terminal signal peptide occupies residues 1–17; it reads MATVCVVGSGILGLAVA. Positions 9, 12, 34, 51, and 55 each coordinate FAD. Asparagine 203 carries N-linked (GlcNAc...) asparagine glycosylation. Arginine 322, glycine 354, and tyrosine 355 together coordinate FAD.

It belongs to the DAMOX/DASOX family. It depends on FAD as a cofactor.

The enzyme catalyses D-aspartate + O2 + H2O = oxaloacetate + H2O2 + NH4(+). It catalyses the reaction D-glutamate + O2 + H2O = H2O2 + 2-oxoglutarate + NH4(+). Its function is as follows. Selectively catalyzes the oxidative deamination of acidic amino acids. Protects the organism from the toxicity of D-amino acids. Enables the organism to utilize D-amino acids as a source of nutrients. Enables the organism to utilize D-aspartate as a nitrogen source. This Komagataella phaffii (strain GS115 / ATCC 20864) (Yeast) protein is D-aspartate oxidase (DDO).